The following is a 364-amino-acid chain: tRNA 2-selenouridine synthase (364 aa).

The 124-residue stretch at 14 to 137 folds into the Rhodanese domain; sequence LIADTPIIDV…LRQTAIQATI (124 aa). The active-site S-selanylcysteine intermediate is Cys97.

It belongs to the SelU family. Monomer.

It catalyses the reaction 5-methylaminomethyl-2-thiouridine(34) in tRNA + selenophosphate + (2E)-geranyl diphosphate + H2O + H(+) = 5-methylaminomethyl-2-selenouridine(34) in tRNA + (2E)-thiogeraniol + phosphate + diphosphate. The catalysed reaction is 5-methylaminomethyl-2-thiouridine(34) in tRNA + (2E)-geranyl diphosphate = 5-methylaminomethyl-S-(2E)-geranyl-thiouridine(34) in tRNA + diphosphate. The enzyme catalyses 5-methylaminomethyl-S-(2E)-geranyl-thiouridine(34) in tRNA + selenophosphate + H(+) = 5-methylaminomethyl-2-(Se-phospho)selenouridine(34) in tRNA + (2E)-thiogeraniol. It carries out the reaction 5-methylaminomethyl-2-(Se-phospho)selenouridine(34) in tRNA + H2O = 5-methylaminomethyl-2-selenouridine(34) in tRNA + phosphate. In terms of biological role, involved in the post-transcriptional modification of the uridine at the wobble position (U34) of tRNA(Lys), tRNA(Glu) and tRNA(Gln). Catalyzes the conversion of 2-thiouridine (S2U-RNA) to 2-selenouridine (Se2U-RNA). Acts in a two-step process involving geranylation of 2-thiouridine (S2U) to S-geranyl-2-thiouridine (geS2U) and subsequent selenation of the latter derivative to 2-selenouridine (Se2U) in the tRNA chain. This chain is tRNA 2-selenouridine synthase, found in Escherichia coli O81 (strain ED1a).